Consider the following 425-residue polypeptide: Kynurenine/alpha-aminoadipate aminotransferase, mitochondrial (425 aa).

The transit peptide at 1-29 directs the protein to the mitochondrion; that stretch reads MNYSRFLTATSLARKTSPIRATVEIMSRA. R20 is a substrate binding site. S40 is subject to Phosphoserine. Substrate contacts are provided by Y74 and Y142. N6-succinyllysine is present on K172. An N6-acetyllysine modification is found at K179. Basic and acidic residues predominate over residues 179-188; sequence KPEDSKDPTK. The segment at 179-208 is disordered; the sequence is KPEDSKDPTKRTPKFLYTIPNGNNPTGNSL. A compositionally biased stretch (polar residues) spans 198–208; sequence PNGNNPTGNSL. Position 202 (N202) interacts with substrate. N6-(pyridoxal phosphate)lysine; alternate is present on K263. Residues K263 and K339 each carry the N6-acetyllysine; alternate modification. An N6-succinyllysine; alternate mark is found at K263 and K339. The residue at position 351 (K351) is an N6-acetyllysine. At K367 the chain carries N6-acetyllysine; alternate. Residue K367 is modified to N6-succinyllysine; alternate. Substrate is bound at residue R399. An N6-acetyllysine modification is found at K422.

Belongs to the class-I pyridoxal-phosphate-dependent aminotransferase family. As to quaternary structure, homodimer. Requires pyridoxal 5'-phosphate as cofactor. In terms of processing, the N-terminus is blocked.

It localises to the mitochondrion. The catalysed reaction is L-kynurenine + 2-oxoglutarate = kynurenate + L-glutamate + H2O. It catalyses the reaction L-2-aminoadipate + 2-oxoglutarate = 2-oxoadipate + L-glutamate. It carries out the reaction glycine + 2-oxoglutarate = glyoxylate + L-glutamate. The enzyme catalyses L-kynurenine + glyoxylate = kynurenate + glycine + H2O. The catalysed reaction is 3-hydroxy-L-kynurenine + glyoxylate = xanthurenate + glycine + H2O. It catalyses the reaction 2-oxohexanoate + L-kynurenine = L-2-aminohexanoate + kynurenate + H2O. It carries out the reaction 3-phenylpyruvate + L-kynurenine = kynurenate + L-phenylalanine + H2O. The enzyme catalyses 4-methylsulfanyl-2-oxobutanoate + L-kynurenine = kynurenate + L-methionine + H2O. The catalysed reaction is 2-oxo-3-sulfanylpropanoate + L-kynurenine = kynurenate + L-cysteine + H2O. It catalyses the reaction indole-3-pyruvate + L-kynurenine = kynurenate + L-tryptophan + H2O. It carries out the reaction 2-oxopentanoate + L-kynurenine = L-2-aminopentanoate + kynurenate + H2O. The enzyme catalyses 4-methyl-2-oxopentanoate + L-kynurenine = kynurenate + L-leucine + H2O. The catalysed reaction is glyoxylate + L-methionine = 4-methylsulfanyl-2-oxobutanoate + glycine. It catalyses the reaction L-2-aminoadipate + glyoxylate = 2-oxoadipate + glycine. It carries out the reaction L-tyrosine + glyoxylate = 3-(4-hydroxyphenyl)pyruvate + glycine. The enzyme catalyses glyoxylate + L-phenylalanine = 3-phenylpyruvate + glycine. The catalysed reaction is L-tryptophan + glyoxylate = indole-3-pyruvate + glycine. It catalyses the reaction L-leucine + glyoxylate = 4-methyl-2-oxopentanoate + glycine. It carries out the reaction 2-oxobutanoate + L-kynurenine = (2S)-2-aminobutanoate + kynurenate + H2O. The enzyme catalyses 2-oxoadipate + L-kynurenine = L-2-aminoadipate + kynurenate + H2O. The catalysed reaction is 2-oxoadipate + L-kynurenine = 4-(2-aminophenyl)-2,4-dioxobutanoate + L-2-aminoadipate. Its pathway is amino-acid degradation; L-lysine degradation via saccharopine pathway; glutaryl-CoA from L-lysine: step 4/6. Its function is as follows. Transaminase with broad substrate specificity. Has transaminase activity towards aminoadipate, kynurenine, methionine and glutamate. Shows activity also towards tryptophan, aspartate and hydroxykynurenine. Accepts a variety of oxo-acids as amino-group acceptors, with a preference for 2-oxoglutarate, 2-oxocaproic acid, phenylpyruvate and alpha-oxo-gamma-methiol butyric acid. Can also use glyoxylate as amino-group acceptor (in vitro). This is Kynurenine/alpha-aminoadipate aminotransferase, mitochondrial from Rattus norvegicus (Rat).